The following is a 228-amino-acid chain: Ribulose-phosphate 3-epimerase (228 aa).

Position 9 (Ser-9) interacts with substrate. A divalent metal cation is bound by residues His-34, Asp-36, His-68, and Asp-177. The active-site Proton acceptor is the Asp-36. Substrate contacts are provided by residues His-68, 177-179 (DGG), and 199-200 (GS). Asp-177 serves as the catalytic Proton donor.

Belongs to the ribulose-phosphate 3-epimerase family. A divalent metal cation serves as cofactor.

It carries out the reaction D-ribulose 5-phosphate = D-xylulose 5-phosphate. It participates in carbohydrate degradation. Functionally, catalyzes the reversible epimerization of D-ribulose 5-phosphate to D-xylulose 5-phosphate. This Buchnera aphidicola subsp. Schizaphis graminum (strain Sg) protein is Ribulose-phosphate 3-epimerase.